We begin with the raw amino-acid sequence, 238 residues long: ATP synthase subunit a (238 aa).

5 helical membrane-spanning segments follow: residues 16–36 (LIWLSMPLWLLSSMVPMTVLF), 79–99 (GLFMMILMLNLSGNFPFFFPV), 103–123 (FVFGFSFALSIWTCLVLSSLL), 129–149 (GLMSLVPTGCPLILVPFMVVV), and 209–229 (VFGAAEVAIACIQCYIFCVLL).

The protein belongs to the ATPase A chain family. As to quaternary structure, F-type ATPases have 2 components, CF(1) - the catalytic core - and CF(0) - the membrane proton channel. CF(1) has five subunits: alpha(3), beta(3), gamma(1), delta(1), epsilon(1). CF(0) has three main subunits: a, b and c.

It is found in the mitochondrion inner membrane. Mitochondrial membrane ATP synthase (F(1)F(0) ATP synthase or Complex V) produces ATP from ADP in the presence of a proton gradient across the membrane which is generated by electron transport complexes of the respiratory chain. F-type ATPases consist of two structural domains, F(1) - containing the extramembraneous catalytic core and F(0) - containing the membrane proton channel, linked together by a central stalk and a peripheral stalk. During catalysis, ATP synthesis in the catalytic domain of F(1) is coupled via a rotary mechanism of the central stalk subunits to proton translocation. Key component of the proton channel; it may play a direct role in the translocation of protons across the membrane. The polypeptide is ATP synthase subunit a (ATP6) (Mytilus edulis (Blue mussel)).